A 137-amino-acid polypeptide reads, in one-letter code: MLQPNRRKFRKEHKGRNEGLATRGTKVSFGEWGLKAIGRGRLTARQIEAARRAMTRHIKRGGRIWIRIFPDKPISKKPAEVRMGNGKGNPEYWVAEIQPGKVLYEMDGVNEALAREAFALAAAKLPIPTTFVTRHLG.

A compositionally biased stretch (basic residues) spans 1 to 14; the sequence is MLQPNRRKFRKEHK. Positions 1–22 are disordered; that stretch reads MLQPNRRKFRKEHKGRNEGLAT.

The protein belongs to the universal ribosomal protein uL16 family. Part of the 50S ribosomal subunit.

In terms of biological role, binds 23S rRNA and is also seen to make contacts with the A and possibly P site tRNAs. In Dechloromonas aromatica (strain RCB), this protein is Large ribosomal subunit protein uL16.